The primary structure comprises 378 residues: Cytochrome b (378 aa).

The next 4 membrane-spanning stretches (helical) occupy residues 33-53, 77-98, 113-133, and 178-198; these read SGSL…FLSM, WLIR…YFHI, XNVG…GYVL, and FFAF…IHLI. Heme b contacts are provided by His-83 and His-97. Heme b is bound at residue His-196. His-201 is a binding site for a ubiquinone. The next 4 membrane-spanning stretches (helical) occupy residues 226 to 246, 288 to 308, 320 to 340, and 347 to 367; these read FKDL…ALFS, LGGV…PILH, LTQF…WIGG, and FIII…VLFP.

This sequence belongs to the cytochrome b family. The cytochrome bc1 complex contains 3 respiratory subunits (MT-CYB, CYC1 and UQCRFS1), 2 core proteins (UQCRC1 and UQCRC2) and probably 6 low-molecular weight proteins. Heme b serves as cofactor.

It is found in the mitochondrion inner membrane. Component of the ubiquinol-cytochrome c reductase complex (complex III or cytochrome b-c1 complex) that is part of the mitochondrial respiratory chain. The b-c1 complex mediates electron transfer from ubiquinol to cytochrome c. Contributes to the generation of a proton gradient across the mitochondrial membrane that is then used for ATP synthesis. The protein is Cytochrome b (mt-cyb) of Nannacara anomala (Goldeneye cichlid).